Reading from the N-terminus, the 276-residue chain is Golgi apparatus membrane protein TVP23 homolog C (276 aa).

Residue M1 is modified to N-acetylmethionine. The disordered stretch occupies residues 1-21 (MLQQDSNDDTEDVSLFDAEEE). 2 consecutive transmembrane segments (helical) span residues 52–72 (LLCELLSSSFITCMVTIILLL) and 126–146 (IFWLGLIACSVLWVIFAFSAL). The interval 254–276 (GESPNSRGTGEPGPKFHLASGMH) is disordered.

The protein belongs to the TVP23 family.

It localises to the membrane. This is Golgi apparatus membrane protein TVP23 homolog C (TVP23C) from Homo sapiens (Human).